The following is a 1807-amino-acid chain: Phospholipase D (1807 aa).

The interval 1–28 (MPGPDDDVREPTAAARTNNSGYGLRAAP) is disordered. Transmembrane regions (helical) follow at residues 257-277 (IAFV…IVTS), 305-325 (AGVF…VFVY), and 587-607 (VYYI…GFLA). Residues 697–734 (TASRMGTGNLAPASSRVDSSTQSEDSFEAPKPPPSSVS) form a disordered region. 2 PLD phosphodiesterase domains span residues 853–880 (GFWS…CFGR) and 1249–1276 (EQIY…NDRS). Residues His858, Lys860, Asp865, His1254, Lys1256, and Asp1261 contribute to the active site. Polar residues-rich tracts occupy residues 1531–1547 (FSRS…SQLD), 1568–1578 (YNSNSMPSNAS), and 1597–1614 (YPNS…QSPA). The disordered stretch occupies residues 1531 to 1621 (FSRSNSVSTP…SPAIATGARS (91 aa)).

Belongs to the phospholipase D family. TM-PLD subfamily.

The protein localises to the membrane. It catalyses the reaction a 1,2-diacyl-sn-glycero-3-phosphocholine + H2O = a 1,2-diacyl-sn-glycero-3-phosphate + choline + H(+). Hydrolyzes glycerol-phospholipids at the terminal phosphodiesteric bond. This Phytophthora infestans (Potato late blight agent) protein is Phospholipase D.